Reading from the N-terminus, the 185-residue chain is Ribosome-recycling factor (185 aa).

It belongs to the RRF family.

It localises to the cytoplasm. Responsible for the release of ribosomes from messenger RNA at the termination of protein biosynthesis. May increase the efficiency of translation by recycling ribosomes from one round of translation to another. The polypeptide is Ribosome-recycling factor (Serratia proteamaculans (strain 568)).